Consider the following 567-residue polypeptide: 2-succinyl-5-enolpyruvyl-6-hydroxy-3-cyclohexene-1-carboxylate synthase (567 aa).

It belongs to the TPP enzyme family. MenD subfamily. In terms of assembly, homodimer. The cofactor is Mg(2+). Mn(2+) serves as cofactor. It depends on thiamine diphosphate as a cofactor.

It carries out the reaction isochorismate + 2-oxoglutarate + H(+) = 5-enolpyruvoyl-6-hydroxy-2-succinyl-cyclohex-3-ene-1-carboxylate + CO2. The protein operates within quinol/quinone metabolism; 1,4-dihydroxy-2-naphthoate biosynthesis; 1,4-dihydroxy-2-naphthoate from chorismate: step 2/7. It functions in the pathway quinol/quinone metabolism; menaquinone biosynthesis. Catalyzes the thiamine diphosphate-dependent decarboxylation of 2-oxoglutarate and the subsequent addition of the resulting succinic semialdehyde-thiamine pyrophosphate anion to isochorismate to yield 2-succinyl-5-enolpyruvyl-6-hydroxy-3-cyclohexene-1-carboxylate (SEPHCHC). The polypeptide is 2-succinyl-5-enolpyruvyl-6-hydroxy-3-cyclohexene-1-carboxylate synthase (Yersinia pestis bv. Antiqua (strain Antiqua)).